A 156-amino-acid polypeptide reads, in one-letter code: Arginine repressor (156 aa).

The protein belongs to the ArgR family.

It is found in the cytoplasm. It functions in the pathway amino-acid biosynthesis; L-arginine biosynthesis [regulation]. Its function is as follows. Regulates arginine biosynthesis genes. This chain is Arginine repressor, found in Vibrio atlanticus (strain LGP32) (Vibrio splendidus (strain Mel32)).